The following is a 501-amino-acid chain: ATP synthase subunit alpha (501 aa).

169–176 (GDRQTGKT) lines the ATP pocket.

It belongs to the ATPase alpha/beta chains family. In terms of assembly, F-type ATPases have 2 components, CF(1) - the catalytic core - and CF(0) - the membrane proton channel. CF(1) has five subunits: alpha(3), beta(3), gamma(1), delta(1), epsilon(1). CF(0) has three main subunits: a(1), b(2) and c(9-12). The alpha and beta chains form an alternating ring which encloses part of the gamma chain. CF(1) is attached to CF(0) by a central stalk formed by the gamma and epsilon chains, while a peripheral stalk is formed by the delta and b chains.

It is found in the cell membrane. It catalyses the reaction ATP + H2O + 4 H(+)(in) = ADP + phosphate + 5 H(+)(out). In terms of biological role, produces ATP from ADP in the presence of a proton gradient across the membrane. The alpha chain is a regulatory subunit. The sequence is that of ATP synthase subunit alpha from Streptococcus pyogenes serotype M2 (strain MGAS10270).